We begin with the raw amino-acid sequence, 249 residues long: Homeobox protein TGIF2LX (249 aa).

Disordered regions lie at residues 1–62 (MEAA…KRKG) and 126–192 (DPIV…KLTV). Positions 9–27 (AETRSRVEKDSRRAKKDSP) are enriched in basic and acidic residues. The span at 28–46 (AKTQSPAQDTSIMLRNNAD) shows a compositional bias: polar residues. Positions 55–118 (EHKKKRKGYL…INARRRILPD (64 aa)) form a DNA-binding region, homeobox; TALE-type. The segment covering 159 to 172 (DNVQSLPLRSSPKG) has biased composition (polar residues).

The protein belongs to the TALE/TGIF homeobox family.

Its subcellular location is the nucleus. In terms of biological role, may have a transcription role in testis. The polypeptide is Homeobox protein TGIF2LX (TGIF2LX) (Macaca fascicularis (Crab-eating macaque)).